Consider the following 139-residue polypeptide: Protein Turandot B (139 aa).

Residues 1 to 21 form the signal peptide; the sequence is MNFKTALICFALLLIGTLCSA.

Belongs to the Turandot family.

It localises to the secreted. Functionally, a humoral factor that may play a role in stress tolerance. This chain is Protein Turandot B, found in Drosophila simulans (Fruit fly).